We begin with the raw amino-acid sequence, 190 residues long: UPF0340 protein BCE33L5016 (190 aa).

It belongs to the UPF0340 family.

The chain is UPF0340 protein BCE33L5016 from Bacillus cereus (strain ZK / E33L).